Here is a 1077-residue protein sequence, read N- to C-terminus: ATP-dependent helicase HRQ1 (1077 aa).

In terms of domain architecture, Helicase ATP-binding spans 299 to 483 (INSLHQGENV…DMFGINEVTL (185 aa)). An ATP-binding site is contributed by 312-319 (TSTSSGKS). The DEAH box signature appears at 423–426 (DELH). Residues 521-678 (ILVQLILNNV…DLVLDFNNIL (158 aa)) enclose the Helicase C-terminal domain.

This sequence belongs to the helicase family. HRQ1 subfamily. Forms heptamer rings. Interacts with RAD4. The cofactor is Mg(2+).

The protein localises to the nucleus. The enzyme catalyses Couples ATP hydrolysis with the unwinding of duplex DNA by translocating in the 3'-5' direction.. The catalysed reaction is ATP + H2O = ADP + phosphate + H(+). In terms of biological role, helicase with 3'-5' helicase activity involved in genome stability. Functions in the RAD4-dependent nucleotide excision repair (NER) pathway and plays a critical role in DNA interstrand cross-link repair. Unwinds relatively long duplex DNA up to 120-bp and requires a long 3'-tail of at least 70 nucleotides for efficient unwinding of duplex DNA. Activity is significantly stimulated by a preexisting fork structure. Shows both processive helicase and DNA strand annealing activities. Affects telomere length by a non-catalytic mechanism, probably through inhibiting telomerase by competing with it for ssDNA binding. This Saccharomyces cerevisiae (strain ATCC 204508 / S288c) (Baker's yeast) protein is ATP-dependent helicase HRQ1.